A 313-amino-acid chain; its full sequence is Porphobilinogen deaminase (313 aa).

Cysteine 241 carries the post-translational modification S-(dipyrrolylmethanemethyl)cysteine.

The protein belongs to the HMBS family. In terms of assembly, monomer. Requires dipyrromethane as cofactor.

The catalysed reaction is 4 porphobilinogen + H2O = hydroxymethylbilane + 4 NH4(+). The protein operates within porphyrin-containing compound metabolism; protoporphyrin-IX biosynthesis; coproporphyrinogen-III from 5-aminolevulinate: step 2/4. Functionally, tetrapolymerization of the monopyrrole PBG into the hydroxymethylbilane pre-uroporphyrinogen in several discrete steps. In Bacillus velezensis (strain DSM 23117 / BGSC 10A6 / LMG 26770 / FZB42) (Bacillus amyloliquefaciens subsp. plantarum), this protein is Porphobilinogen deaminase.